A 418-amino-acid chain; its full sequence is rRNA methyltransferase 3, mitochondrial (418 aa).

Residues 1-40 constitute a mitochondrion transit peptide; it reads MAAPAKGMWCSLGSLLRVVQTRDLNARRWVRALRRSPVRV. The interval 41–90 is disordered; sequence LSPSGQVEERKRAPDQQPRKAVPKASSQGQRQKQPLETSPSQTPHTWEEA. Positions 47 to 58 are enriched in basic and acidic residues; it reads VEERKRAPDQQP. Residues 65 to 85 are compositionally biased toward polar residues; sequence ASSQGQRQKQPLETSPSQTPH. S-adenosyl-L-methionine-binding residues include Gly354, Ile378, and Leu387.

This sequence belongs to the class IV-like SAM-binding methyltransferase superfamily. RNA methyltransferase TrmH family.

The protein localises to the mitochondrion. It catalyses the reaction guanosine(1370) in 16S rRNA + S-adenosyl-L-methionine = 2'-O-methylguanosine(1370) in 16S rRNA + S-adenosyl-L-homocysteine + H(+). In terms of biological role, S-adenosyl-L-methionine-dependent 2'-O-ribose methyltransferase that catalyzes the formation of 2'-O-methylguanosine at position 1370 (Gm1370) in the 16S mitochondrial large subunit ribosomal RNA (mtLSU rRNA), a conserved modification in the peptidyl transferase domain of the mtLSU rRNA. Also required for formation of 2'-O-methyluridine at position 1369 (Um1369) mediated by MRM2. This Mus musculus (Mouse) protein is rRNA methyltransferase 3, mitochondrial.